We begin with the raw amino-acid sequence, 89 residues long: DNA/RNA-binding protein Alba 2 (89 aa).

An N6-acetyllysine modification is found at Lys12.

It belongs to the histone-like Alba family. Post-translationally, acetylated. Acetylation at Lys-12 decreases DNA-binding affinity.

The protein resides in the cytoplasm. Its subcellular location is the chromosome. In terms of biological role, binds double-stranded DNA tightly but without sequence specificity. Involved in DNA compaction. The chain is DNA/RNA-binding protein Alba 2 from Saccharolobus shibatae (strain ATCC 51178 / DSM 5389 / JCM 8931 / NBRC 15437 / B12) (Sulfolobus shibatae).